Reading from the N-terminus, the 346-residue chain is Tryptophan--tRNA ligase (346 aa).

ATP is bound by residues 11–13 and 19–20; these read RPT and GH. The short motif at 12 to 20 is the 'HIGH' region element; the sequence is PTGKLHLGH. Aspartate 143 is an L-tryptophan binding site. ATP-binding positions include 155–157, leucine 193, and 201–205; these read GKD and KMSKS. The 'KMSKS' region signature appears at 201 to 205; it reads KMSKS.

This sequence belongs to the class-I aminoacyl-tRNA synthetase family. Homodimer.

It localises to the cytoplasm. The catalysed reaction is tRNA(Trp) + L-tryptophan + ATP = L-tryptophyl-tRNA(Trp) + AMP + diphosphate + H(+). Its function is as follows. Catalyzes the attachment of tryptophan to tRNA(Trp). The polypeptide is Tryptophan--tRNA ligase (Chlamydia muridarum (strain MoPn / Nigg)).